Reading from the N-terminus, the 152-residue chain is Putative membrane protein insertion efficiency factor (152 aa).

A disordered region spans residues Ala81–Val152.

The protein belongs to the UPF0161 family.

It is found in the cell membrane. Functionally, could be involved in insertion of integral membrane proteins into the membrane. The chain is Putative membrane protein insertion efficiency factor from Frankia casuarinae (strain DSM 45818 / CECT 9043 / HFP020203 / CcI3).